The following is a 551-amino-acid chain: Fusion glycoprotein F0 (551 aa).

The signal sequence occupies residues 1–23 (MHHLHPMIVCIFVMYTGIVGSDA). The Extracellular portion of the chain corresponds to 24-492 (IAGDQLLNIG…TAKTLYSLSA (469 aa)). Residues Asn-65, Asn-69, Asn-77, and Asn-90 are each glycosylated (N-linked (GlcNAc...) asparagine; by host). 5 disulfides stabilise this stretch: Cys-68–Cys-189, Cys-328–Cys-337, Cys-352–Cys-360, Cys-384–Cys-389, and Cys-391–Cys-414. The fusion peptide stretch occupies residues 107-131 (FAGVVVGLAALGVATAAQITAAVAI). Residues 132–160 (VKANANAAAINNLASSIQSTNKAVSDVID) are a coiled coil. 2 N-linked (GlcNAc...) asparagine; by host glycosylation sites follow: Asn-431 and Asn-461. Residues 456 to 481 (QINSINKSLKSAEDWIADSNFFANQA) adopt a coiled-coil conformation. A helical membrane pass occupies residues 493–513 (IALILSVITLVVVGLLIAYII). Topologically, residues 514-551 (KLVSQIHQFRSLAATTMFHRENPAFFSKNNHGNIYGIS) are cytoplasmic.

The protein belongs to the paramyxoviruses fusion glycoprotein family. Homotrimer of disulfide-linked F1-F2. In terms of processing, the inactive precursor F0 is glycosylated and proteolytically cleaved into F1 and F2 to be functionally active. The cleavage is mediated by cellular proteases during the transport and maturation of the polypeptide.

It localises to the virion membrane. Its subcellular location is the host cell membrane. Its function is as follows. Class I viral fusion protein. Under the current model, the protein has at least 3 conformational states: pre-fusion native state, pre-hairpin intermediate state, and post-fusion hairpin state. During viral and plasma cell membrane fusion, the heptad repeat (HR) regions assume a trimer-of-hairpins structure, positioning the fusion peptide in close proximity to the C-terminal region of the ectodomain. The formation of this structure appears to drive apposition and subsequent fusion of viral and plasma cell membranes. Directs fusion of viral and cellular membranes leading to delivery of the nucleocapsid into the cytoplasm. This fusion is pH independent and occurs directly at the outer cell membrane. The trimer of F1-F2 (F protein) probably interacts with HN at the virion surface. Upon HN binding to its cellular receptor, the hydrophobic fusion peptide is unmasked and interacts with the cellular membrane, inducing the fusion between cell and virion membranes. Later in infection, F proteins expressed at the plasma membrane of infected cells could mediate fusion with adjacent cells to form syncytia, a cytopathic effect that could lead to tissue necrosis. The sequence is that of Fusion glycoprotein F0 (F) from Human parainfluenza 2 virus (strain Greer) (HPIV-2).